We begin with the raw amino-acid sequence, 128 residues long: Flagellar basal body rod protein FlgB (128 aa).

It belongs to the flagella basal body rod proteins family. The basal body constitutes a major portion of the flagellar organelle and consists of a number of rings mounted on a central rod. In Gram-negative bacteria, at least four rings, L, P, S and M are present, whereas Gram-positive bacteria lack the L and P rings. The rod consists of about 26 subunits of FlgG in the distal portion, and FlgB, FlgC and FlgF build up the proximal portion of the rod with about 6 subunits each. Rod assembly occurs by export via the flagellum-specific pathway of its constituent proteins and by their incorporation into the rod structure in the probable order of FlgB, FlgC, FlgF and FlgG. Another protein, FliE, also assembles onto the stable rod structure.

It is found in the bacterial flagellum basal body. In terms of biological role, structural component of flagellum, the bacterial motility apparatus. Part of the rod structure of flagellar basal body. This Cereibacter sphaeroides (strain ATCC 17029 / ATH 2.4.9) (Rhodobacter sphaeroides) protein is Flagellar basal body rod protein FlgB.